We begin with the raw amino-acid sequence, 499 residues long: Taxadiene 5-alpha hydroxylase (499 aa).

The helical; Signal-anchor transmembrane segment at 22–42 (TESFSIALSAIAGILLLLLLF) threads the bilayer. Heme is bound at residue Cys445.

This sequence belongs to the cytochrome P450 family. The cofactor is heme.

The protein resides in the membrane. It carries out the reaction taxa-4(5),11(12)-diene + reduced [NADPH--hemoprotein reductase] + O2 = taxa-4(20),11-dien-5alpha-ol + oxidized [NADPH--hemoprotein reductase] + H2O + H(+). Its pathway is alkaloid biosynthesis; taxol biosynthesis; taxa-4(20),11-dien-5alpha-ol from geranylgeranyl diphosphate: step 2/2. Functionally, catalyzes the first oxygenation step of taxol biosynthesis. Can use both taxa-4(5),11(12)-diene and taxa-4(20),11(12)-diene as substrate. This is Taxadiene 5-alpha hydroxylase from Taxus cuspidata (Japanese yew).